A 148-amino-acid polypeptide reads, in one-letter code: LTEEQKQDIREAFDLFDTDGSGTIDAKELKVAMRALGFEPKKEEIKKMIADIDKDGSGTIDFEEFLQMMTAKMGERDSREEIMKAFRLFDDDETGKISFKNLKRVAKELGENMTDEELQEMIDEADRDGDGEVNEEEFFRIMKKTSLF.

EF-hand domains are found at residues 4-39, 40-75, 77-112, and 113-148; these read EQKQ…LGFE, PKKE…KMGE, DSRE…LGEN, and MTDE…TSLF. 10 residues coordinate Ca(2+): aspartate 17, aspartate 19, serine 21, threonine 23, glutamate 28, aspartate 53, aspartate 55, serine 57, threonine 59, and glutamate 64. 5 residues coordinate Ca(2+): aspartate 126, aspartate 128, aspartate 130, glutamate 132, and glutamate 137.

Belongs to the centrin family. In terms of tissue distribution, ubiquitous.

In terms of biological role, this calcium-binding protein is found in the basal body complexes (the functional homolog of the centrosome in animal cell). In mitotic cells it is specifically associated with the poles of the mitotic spindles at the sites of the duplicated basal body complexes. The sequence is that of Caltractin from Tetraselmis striata (Green microalga).